We begin with the raw amino-acid sequence, 624 residues long: Bifunctional 3'-phosphoadenosine 5'-phosphosulfate synthase 1 (624 aa).

Met-1 bears the N-acetylmethionine mark. An adenylyl-sulfate kinase region spans residues 1–225 (MEIPGSLCKK…VVELLQERDI (225 aa)). At Lys-12 the chain carries N6-acetyllysine. An ATP-binding site is contributed by 62 to 67 (GAGKTT). Adenosine 5'-phosphosulfate contacts are provided by residues 89–92 (DNIR), Phe-101, 106–109 (REEN), 132–133 (IS), Lys-171, and 184–185 (GF). Residues Cys-207, Cys-212, 419 to 422 (QLRN), 521 to 525 (GRDPA), and Ala-563 each bind ATP. The tract at residues 234-624 (VKELYVPENK…TEYYKSLEKA (391 aa)) is sulfate adenylyltransferase.

It in the N-terminal section; belongs to the APS kinase family. In the C-terminal section; belongs to the sulfate adenylyltransferase family. Homodimer. Expressed in testis, pancreas, kidney, thymus, prostate, ovary, small intestine, colon, leukocytes and liver. Also expressed in high endothelial venules (HEV) cells and in cartilage.

The enzyme catalyses sulfate + ATP + H(+) = adenosine 5'-phosphosulfate + diphosphate. The catalysed reaction is adenosine 5'-phosphosulfate + ATP = 3'-phosphoadenylyl sulfate + ADP + H(+). The protein operates within sulfur metabolism; sulfate assimilation. With respect to regulation, inhibited by chlorate. The kinase activity is subject to inhibition by the substrate adenylyl sulfate. Functionally, bifunctional enzyme with both ATP sulfurylase and APS kinase activity, which mediates two steps in the sulfate activation pathway. The first step is the transfer of a sulfate group to ATP to yield adenosine 5'-phosphosulfate (APS), and the second step is the transfer of a phosphate group from ATP to APS yielding 3'-phosphoadenylylsulfate (PAPS: activated sulfate donor used by sulfotransferase). In mammals, PAPS is the sole source of sulfate; APS appears to be only an intermediate in the sulfate-activation pathway. Required for normal biosynthesis of sulfated L-selectin ligands in endothelial cells. The polypeptide is Bifunctional 3'-phosphoadenosine 5'-phosphosulfate synthase 1 (PAPSS1) (Homo sapiens (Human)).